Consider the following 435-residue polypeptide: Trigger factor (435 aa).

The 86-residue stretch at 163-248 (DDITLIDFTG…INEIKRKELA (86 aa)) folds into the PPIase FKBP-type domain.

It belongs to the FKBP-type PPIase family. Tig subfamily.

The protein localises to the cytoplasm. It catalyses the reaction [protein]-peptidylproline (omega=180) = [protein]-peptidylproline (omega=0). Functionally, involved in protein export. Acts as a chaperone by maintaining the newly synthesized protein in an open conformation. Functions as a peptidyl-prolyl cis-trans isomerase. This is Trigger factor from Desulforamulus reducens (strain ATCC BAA-1160 / DSM 100696 / MI-1) (Desulfotomaculum reducens).